Consider the following 184-residue polypeptide: MTIEVSNESGIDVSEEELISVARFVIGKMDVNPAAELSMLLLDTAAMADLHMRWMDLPGPTDVMSFPMDELEPGGRPDAPEPGPSMLGDIVLCPEFAAKQAADAGHTLGQELALLTVHGVLHLLGYDHAEPDEEKEMFALQRELLEEWVADQVQAYHQDRQSQKDQRLLDKSRYFDELNHGDTP.

The Zn(2+) site is built by histidine 118, histidine 122, and histidine 128. The disordered stretch occupies residues tyrosine 156–proline 184. Residues histidine 157 to proline 184 show a composition bias toward basic and acidic residues.

Belongs to the endoribonuclease YbeY family. Zn(2+) is required as a cofactor.

It localises to the cytoplasm. Its function is as follows. Single strand-specific metallo-endoribonuclease involved in late-stage 70S ribosome quality control and in maturation of the 3' terminus of the 16S rRNA. This chain is Endoribonuclease YbeY, found in Mycolicibacterium vanbaalenii (strain DSM 7251 / JCM 13017 / BCRC 16820 / KCTC 9966 / NRRL B-24157 / PYR-1) (Mycobacterium vanbaalenii).